Consider the following 288-residue polypeptide: Bis(5'-nucleosyl)-tetraphosphatase, symmetrical (288 aa).

The protein belongs to the Ap4A hydrolase family.

The enzyme catalyses P(1),P(4)-bis(5'-adenosyl) tetraphosphate + H2O = 2 ADP + 2 H(+). In terms of biological role, hydrolyzes diadenosine 5',5'''-P1,P4-tetraphosphate to yield ADP. This Pseudomonas putida (strain GB-1) protein is Bis(5'-nucleosyl)-tetraphosphatase, symmetrical.